Here is a 428-residue protein sequence, read N- to C-terminus: Tubby-like F-box protein 5 (428 aa).

The disordered stretch occupies residues 17–65 (IGSMSRRAADGRAGGGRGGSRHSWPVLWSEQQQPPQQQQLQRQEHQQQQ). Low complexity predominate over residues 47–65 (QQQPPQQQQLQRQEHQQQQ). An F-box domain is found at 65–117 (QGRWANLPPELLLDVIQRVEASEATWPARRQVVACAAVCRSWREVTKEVVKTL).

Belongs to the TUB family. As to expression, ubiquitous.

This Oryza sativa subsp. japonica (Rice) protein is Tubby-like F-box protein 5 (TULP5).